The following is a 264-amino-acid chain: Phosphonoacetaldehyde hydrolase (264 aa).

The active-site Nucleophile is the Asp-9. Mg(2+)-binding residues include Asp-9 and Ala-11. Lys-50 functions as the Schiff-base intermediate with substrate in the catalytic mechanism. A Mg(2+)-binding site is contributed by Asp-183.

Belongs to the HAD-like hydrolase superfamily. PhnX family. Homodimer. It depends on Mg(2+) as a cofactor.

It catalyses the reaction phosphonoacetaldehyde + H2O = acetaldehyde + phosphate + H(+). Its function is as follows. Involved in phosphonate degradation. In Bacillus cereus (strain AH820), this protein is Phosphonoacetaldehyde hydrolase.